The sequence spans 102 residues: Small ribosomal subunit protein uS10 (102 aa).

The protein belongs to the universal ribosomal protein uS10 family. As to quaternary structure, part of the 30S ribosomal subunit.

In terms of biological role, involved in the binding of tRNA to the ribosomes. The polypeptide is Small ribosomal subunit protein uS10 (Citrifermentans bemidjiense (strain ATCC BAA-1014 / DSM 16622 / JCM 12645 / Bem) (Geobacter bemidjiensis)).